The chain runs to 676 residues: WD repeat-containing protein 48 (676 aa).

Y28 carries the post-translational modification Phosphotyrosine. 8 WD repeats span residues 28–67, 73–112, 115–154, 166–205, 208–247, 250–289, 292–334, and 358–397; these read YNRNGVNALQLDPALNRLFTAGRDSIIRIWSVNQHKQDPY, HHTDWVNDVVLCCNGKTLISASSDTTVKVWNAHKGFCMST, THKDYVKALAYAKDKELVASAGLDRQIFLWDVNTLTALTA, GNKDSIYSLAMNQLGTIIVSGSTEKVLRVWDPRTCAKLMK, GHTDNVKALLLHRDGTQCLSGSSDGTIRLWSLGQQRCIAT, VHDEGVWALQVNDAFTHVYSGGRDRKIYCTDLRNPDIRVL, EEKA…NFRA, and KGGASIIQCHILNDKRHILTKDTNNNVAYWDVLKACKVED. K214 is subject to N6-acetyllysine. At K578 the chain carries N6-acetyllysine. The tract at residues 607-628 is disordered; the sequence is LDNESQTTSSSNNEKPEQEKEE. Residues 609–619 are compositionally biased toward low complexity; the sequence is NESQTTSSSNN. Residue T613 is modified to Phosphothreonine.

Belongs to the WD repeat WDR48 family. As to quaternary structure, interacts with USP46. Interacts with USP1. Interacts with USP12. Component of the USP12-WDR20-WDR48 deubiquitinating complex. Component of the USP12-DMWD-WDR48 deubiquitinating complex. Interacts with PHLPP1. Interacts with RAD51AP1; the interaction is direct and promotes formation of a trimeric complex with RAD51 via RAD51AP1. Interacts with ATAD5; the interaction regulates USP1-mediated PCNA deubiquitination. Interacts with RAD51; the interaction is enhanced under replication stress. Interacts with ITCH; the interaction is more efficient when both USP12 and WDR48/UAF1 are involved and may facilitate recruitment of the USP12 deubiquitinating complex to Notch.

The protein resides in the nucleus. Its subcellular location is the cytoplasm. It is found in the lysosome. It localises to the late endosome. Regulator of deubiquitinating complexes, which acts as a strong activator of USP1, USP12 and USP46. Enhances the USP1-mediated deubiquitination of FANCD2; USP1 being almost inactive by itself. Activates deubiquitination by increasing the catalytic turnover without increasing the affinity of deubiquitinating enzymes for the substrate. Also activates deubiquitinating activity of complexes containing USP12. Docks at the distal end of the USP12 fingers domain and induces a cascade of structural changes leading to the activation of the enzyme. Together with RAD51AP1, promotes DNA repair by stimulating RAD51-mediated homologous recombination. Binds single-stranded DNA (ssDNA) and double-stranded DNA (dsDNA). DNA-binding is required both for USP1-mediated deubiquitination of FANCD2 and stimulation of RAD51-mediated homologous recombination: both WDR48/UAF1 and RAD51AP1 have coordinated role in DNA-binding during these processes. Together with ATAD5 and by regulating USP1 activity, has a role in PCNA-mediated translesion synthesis (TLS) by deubiquitinating monoubiquitinated PCNA. Together with ATAD5, has a role in recruiting RAD51 to stalled forks during replication stress. This is WD repeat-containing protein 48 (Wdr48) from Mus musculus (Mouse).